The sequence spans 156 residues: MGRSISVSFGLLVVFLSLSGTGADFDCPSGWSAYDQHCYQAVDEPKSWADAEKFCTEQANGGHLVSIDSKKEANFVAELVSQNIKETRRTDFVWIGLRVEDKRQQCSSEWSDGSSINYQNWIEAESKKCLGLEKQTRYRKWVNLNCGQPYRFTCEI.

A signal peptide spans methionine 1 to alanine 23. 3 disulfide bridges follow: cysteine 27–cysteine 38, cysteine 55–cysteine 154, and cysteine 129–cysteine 146. The region spanning tyrosine 34–glutamate 155 is the C-type lectin domain.

The protein belongs to the snaclec family. As to quaternary structure, heterodimer; disulfide-linked. In terms of tissue distribution, expressed by the venom gland.

The protein localises to the secreted. Its function is as follows. Interferes with one step of hemostasis (modulation of platelet aggregation, or coagulation cascade, for example). This chain is Snaclec A11, found in Macrovipera lebetinus (Levantine viper).